The chain runs to 859 residues: DNA mismatch repair protein MutS (859 aa).

622–629 (GPNMGGKS) is an ATP binding site.

Belongs to the DNA mismatch repair MutS family.

This protein is involved in the repair of mismatches in DNA. It is possible that it carries out the mismatch recognition step. This protein has a weak ATPase activity. The protein is DNA mismatch repair protein MutS of Coxiella burnetii (strain RSA 493 / Nine Mile phase I).